The following is a 277-amino-acid chain: Phosphoenolpyruvate synthase regulatory protein (277 aa).

Position 157–164 (157–164 (GVSRCGKT)) interacts with ADP.

The protein belongs to the pyruvate, phosphate/water dikinase regulatory protein family. PSRP subfamily.

The catalysed reaction is [pyruvate, water dikinase] + ADP = [pyruvate, water dikinase]-phosphate + AMP + H(+). The enzyme catalyses [pyruvate, water dikinase]-phosphate + phosphate + H(+) = [pyruvate, water dikinase] + diphosphate. Bifunctional serine/threonine kinase and phosphorylase involved in the regulation of the phosphoenolpyruvate synthase (PEPS) by catalyzing its phosphorylation/dephosphorylation. The sequence is that of Phosphoenolpyruvate synthase regulatory protein from Escherichia coli O7:K1 (strain IAI39 / ExPEC).